The following is a 235-amino-acid chain: Octanoyltransferase (235 aa).

One can recognise a BPL/LPL catalytic domain in the interval 30-214 (NELEDTLLLL…YFGKVFGAKF (185 aa)). Residues 75-82 (RGGDVTYH), 144-146 (AIG), and 157-159 (GFA) each bind substrate. The active-site Acyl-thioester intermediate is cysteine 175.

Belongs to the LipB family.

Its subcellular location is the cytoplasm. The enzyme catalyses octanoyl-[ACP] + L-lysyl-[protein] = N(6)-octanoyl-L-lysyl-[protein] + holo-[ACP] + H(+). The protein operates within protein modification; protein lipoylation via endogenous pathway; protein N(6)-(lipoyl)lysine from octanoyl-[acyl-carrier-protein]: step 1/2. Functionally, catalyzes the transfer of endogenously produced octanoic acid from octanoyl-acyl-carrier-protein onto the lipoyl domains of lipoate-dependent enzymes. Lipoyl-ACP can also act as a substrate although octanoyl-ACP is likely to be the physiological substrate. The protein is Octanoyltransferase of Caldicellulosiruptor saccharolyticus (strain ATCC 43494 / DSM 8903 / Tp8T 6331).